Here is a 404-residue protein sequence, read N- to C-terminus: Cysteine desulfurase IscS (404 aa).

Pyridoxal 5'-phosphate is bound by residues 75-76, Asn155, Gln183, and 203-205; these read AT and SAH. Position 206 is an N6-(pyridoxal phosphate)lysine (Lys206). Thr243 is a binding site for pyridoxal 5'-phosphate. The Cysteine persulfide intermediate role is filled by Cys328. A [2Fe-2S] cluster-binding site is contributed by Cys328.

It belongs to the class-V pyridoxal-phosphate-dependent aminotransferase family. NifS/IscS subfamily. In terms of assembly, homodimer. Forms a heterotetramer with IscU, interacts with other sulfur acceptors. The cofactor is pyridoxal 5'-phosphate.

It localises to the cytoplasm. The catalysed reaction is (sulfur carrier)-H + L-cysteine = (sulfur carrier)-SH + L-alanine. Its pathway is cofactor biosynthesis; iron-sulfur cluster biosynthesis. Master enzyme that delivers sulfur to a number of partners involved in Fe-S cluster assembly, tRNA modification or cofactor biosynthesis. Catalyzes the removal of elemental sulfur atoms from cysteine to produce alanine. Functions as a sulfur delivery protein for Fe-S cluster synthesis onto IscU, an Fe-S scaffold assembly protein, as well as other S acceptor proteins. The protein is Cysteine desulfurase IscS of Pseudomonas putida (strain ATCC 700007 / DSM 6899 / JCM 31910 / BCRC 17059 / LMG 24140 / F1).